The chain runs to 137 residues: Acidic phospholipase A2 PL-II (137 aa).

The signal sequence occupies residues Ala1 to Leu17. 7 disulfides stabilise this stretch: Cys28-Cys89, Cys44-Cys136, Cys46-Cys62, Cys61-Cys117, Cys68-Cys110, Cys78-Cys103, and Cys96-Cys108. Ca(2+) contacts are provided by Tyr45, Gly47, and Gly49. His65 is an active-site residue. Ca(2+) is bound at residue Asp66. Residue Asp111 is part of the active site.

Ca(2+) serves as cofactor. In terms of tissue distribution, expressed by the venom gland.

It localises to the secreted. The enzyme catalyses a 1,2-diacyl-sn-glycero-3-phosphocholine + H2O = a 1-acyl-sn-glycero-3-phosphocholine + a fatty acid + H(+). Functionally, snake venom phospholipase A2 (PLA2) that may act in the hemostasis system of the prey. Exhibits hydrolytic activities, and prefers the anionic micelles (dPPC with deoxycholate) (54 umol/mg/min) to the zwitterionic micelles (dPPC with Triton X-100) (15 umol/mg/min). PLA2 catalyzes the calcium-dependent hydrolysis of the 2-acyl groups in 3-sn-phosphoglycerides. This chain is Acidic phospholipase A2 PL-II, found in Walterinnesia aegyptia (Desert black snake).